The following is a 204-amino-acid chain: Colicin-A (204 aa).

Transmembrane regions (helical) follow at residues 139-161 (SWVLSGIASSVALGIFSATLGAY) and 165-187 (LGVPAIAVGIAGILLAAVVGALI).

It belongs to the channel forming colicin family.

The protein resides in the cell membrane. Functionally, this colicin is a channel-forming colicin. This class of transmembrane toxins depolarize the cytoplasmic membrane, leading to dissipation of cellular energy. Its function is as follows. Colicins are polypeptide toxins produced by and active against E.coli and closely related bacteria. This is Colicin-A (caa) from Escherichia coli.